Consider the following 672-residue polypeptide: DNA ligase (672 aa).

Residues 32–36 (DSEYD), 81–82 (SL), and Glu-114 each bind NAD(+). Catalysis depends on Lys-116, which acts as the N6-AMP-lysine intermediate. NAD(+)-binding residues include Arg-137, Glu-174, Lys-291, and Lys-315. Zn(2+) contacts are provided by Cys-409, Cys-412, Cys-427, and Cys-433. In terms of domain architecture, BRCT spans 592–672 (VNENPFKEKT…EFLEIVNSFS (81 aa)).

It belongs to the NAD-dependent DNA ligase family. LigA subfamily. It depends on Mg(2+) as a cofactor. Mn(2+) serves as cofactor.

The catalysed reaction is NAD(+) + (deoxyribonucleotide)n-3'-hydroxyl + 5'-phospho-(deoxyribonucleotide)m = (deoxyribonucleotide)n+m + AMP + beta-nicotinamide D-nucleotide.. Functionally, DNA ligase that catalyzes the formation of phosphodiester linkages between 5'-phosphoryl and 3'-hydroxyl groups in double-stranded DNA using NAD as a coenzyme and as the energy source for the reaction. It is essential for DNA replication and repair of damaged DNA. The polypeptide is DNA ligase (Actinobacillus succinogenes (strain ATCC 55618 / DSM 22257 / CCUG 43843 / 130Z)).